A 1007-amino-acid chain; its full sequence is Protocadherin alpha-C2 (1007 aa).

A signal peptide spans 1-42 (MEQAGTRPAATEHPRLRRPMPWLLLLPLLLLLLLLLPGPAAS). 5 consecutive Cadherin domains span residues 43–148 (QLRY…SPRF), 149–257 (PRPN…SPAF), 258–365 (DQST…APEV), 374–469 (VPEN…PPSF), and 470–579 (LEDS…APHI). The Extracellular portion of the chain corresponds to 43–708 (QLRYSVPEEQ…RTYSEITLYL (666 aa)). Residues Asn280 and Asn436 are each glycosylated (N-linked (GlcNAc...) asparagine). Residues Asn586 and Asn657 are each glycosylated (N-linked (GlcNAc...) asparagine). One can recognise a Cadherin 6 domain in the interval 594 to 691 (GPRTAPAGYL…DRVSKILPDT (98 aa)). The helical transmembrane segment at 709-729 (IIALSTVSFIFLLTIIILSII) threads the bilayer. Residues 730-1007 (KCYRYTAYGT…GNSTTDNSDQ (278 aa)) lie on the Cytoplasmic side of the membrane. PXXP repeat units follow at residues 856–859 (PRQP), 889–892 (PGGP), 930–933 (PGNP), and 948–951 (PGSP). Residues 856–951 (PRQPNPDWRY…PDKFIIPGSP (96 aa)) are 4 X 4 AA repeats of P-X-X-P. The interval 885–1007 (LRAGPGGPDQ…GNSTTDNSDQ (123 aa)) is disordered. The span at 966-980 (DKSDFITFGKKEETK) shows a compositional bias: basic and acidic residues.

The protein resides in the cell membrane. Potential calcium-dependent cell-adhesion protein. May be involved in the establishment and maintenance of specific neuronal connections in the brain. The protein is Protocadherin alpha-C2 (PCDHAC2) of Pan troglodytes (Chimpanzee).